Consider the following 62-residue polypeptide: Arabinogalactan protein 40 (62 aa).

An N-terminal signal peptide occupies residues 1–22 (MEMKNIFVALFISAVLVSSVSA). 3 positions are modified to 4-hydroxyproline: Pro-28, Pro-30, and Pro-32. Residues Pro-28, Pro-30, and Pro-32 are each glycosylated (O-linked (Ara...) hydroxyproline). Ser-35 is lipidated: GPI-anchor amidated serine. A propeptide spans 36–62 (SASTVAFPVVGSIVAASLSAFLALLLQ) (removed in mature form).

The protein belongs to the AG-peptide AGP family. Post-translationally, contains 4-hydroxyproline; hydroxylated on Pro-28, Pro-30 and Pro-32. O-glycosylated on hydroxyprolines; noncontiguous hydroxylproline residues are glycosylated with arabinogalactan.

The protein localises to the cell membrane. In terms of biological role, proteoglycan that seems to be implicated in diverse developmental roles such as differentiation, cell-cell recognition, embryogenesis and programmed cell death. This Arabidopsis thaliana (Mouse-ear cress) protein is Arabinogalactan protein 40.